Consider the following 426-residue polypeptide: Histidine--tRNA ligase (426 aa).

Belongs to the class-II aminoacyl-tRNA synthetase family. In terms of assembly, homodimer.

The protein localises to the cytoplasm. It carries out the reaction tRNA(His) + L-histidine + ATP = L-histidyl-tRNA(His) + AMP + diphosphate + H(+). The sequence is that of Histidine--tRNA ligase from Streptococcus thermophilus (strain ATCC BAA-491 / LMD-9).